The primary structure comprises 226 residues: Probable GPI-anchored adhesin-like protein PGA28 (226 aa).

Positions 1–26 are cleaved as a signal peptide; sequence MKFFAYFAVIALSSASLINLFKRATA. Residues 119–209 form a disordered region; it reads DTEATTGSDT…SQQTSSHAGG (91 aa). Over residues 131–148 the composition is skewed to low complexity; it reads KAATGATTSAGTGVTKTS. The span at 149–160 shows a compositional bias: polar residues; sequence ETGGVSSTANSE. The segment covering 161–208 has biased composition (low complexity); sequence AKSGSVTTSKSGSTSISESKTTSGSSSSGKSSSSTSSASSQQTSSHAG. Ser197 carries GPI-anchor amidated serine lipidation. The propeptide at 198-226 is removed in mature form; that stretch reads ASSQQTSSHAGGASGAFVSLLGLFAALLI.

Post-translationally, predicted to be a cleavage substrate for KEX2.

It localises to the cell membrane. Putative adhesin which is involved in cell adhesion and virulence. Plays a role in Candida-bacterial interactions and subsequent regulation of filamentation. In Candida albicans (strain SC5314 / ATCC MYA-2876) (Yeast), this protein is Probable GPI-anchored adhesin-like protein PGA28 (PGA28).